A 95-amino-acid polypeptide reads, in one-letter code: Large ribosomal subunit protein bL28 (95 aa).

Belongs to the bacterial ribosomal protein bL28 family.

The protein is Large ribosomal subunit protein bL28 of Zymomonas mobilis subsp. mobilis (strain ATCC 31821 / ZM4 / CP4).